A 601-amino-acid chain; its full sequence is NADH-quinone oxidoreductase subunit C/D (601 aa).

The segment at 1 to 191 is NADH dehydrogenase I subunit C; that stretch reads MKLTREFPSN…DPFMLDAVKQ (191 aa). The interval 215 to 601 is NADH dehydrogenase I subunit D; it reads DYMFLNLGPN…IDFVMSDVDR (387 aa).

In the N-terminal section; belongs to the complex I 30 kDa subunit family. The protein in the C-terminal section; belongs to the complex I 49 kDa subunit family. As to quaternary structure, NDH-1 is composed of 13 different subunits. Subunits NuoB, CD, E, F, and G constitute the peripheral sector of the complex.

Its subcellular location is the cell inner membrane. It carries out the reaction a quinone + NADH + 5 H(+)(in) = a quinol + NAD(+) + 4 H(+)(out). NDH-1 shuttles electrons from NADH, via FMN and iron-sulfur (Fe-S) centers, to quinones in the respiratory chain. The immediate electron acceptor for the enzyme in this species is believed to be ubiquinone. Couples the redox reaction to proton translocation (for every two electrons transferred, four hydrogen ions are translocated across the cytoplasmic membrane), and thus conserves the redox energy in a proton gradient. This is NADH-quinone oxidoreductase subunit C/D from Aeromonas hydrophila subsp. hydrophila (strain ATCC 7966 / DSM 30187 / BCRC 13018 / CCUG 14551 / JCM 1027 / KCTC 2358 / NCIMB 9240 / NCTC 8049).